The chain runs to 107 residues: Multidrug resistance protein mmr (107 aa).

Transmembrane regions (helical) follow at residues 2-19, 29-51, 58-77, and 82-104; these read AYLF…ATTL, LVPT…LSIS, VAYA…IAVL, and PVSV…LNLA.

This sequence belongs to the drug/metabolite transporter (DMT) superfamily. Small multidrug resistance (SMR) (TC 2.A.7.1) family. Mmr subfamily.

It is found in the cell membrane. Functionally, multidrug efflux pump. Confers resistance to tetraphenylphosphonium (TPP), erythromycin, ethidium bromide, acriflavine, safranin O and pyronin Y. The chain is Multidrug resistance protein mmr (mmr) from Mycobacterium leprae (strain TN).